Here is a 272-residue protein sequence, read N- to C-terminus: 3-methyl-2-oxobutanoate hydroxymethyltransferase (272 aa).

2 residues coordinate Mg(2+): Asp-54 and Asp-93. 3-methyl-2-oxobutanoate-binding positions include 54 to 55, Asp-93, and Lys-121; that span reads DS. Glu-123 contacts Mg(2+). Catalysis depends on Glu-190, which acts as the Proton acceptor.

It belongs to the PanB family. As to quaternary structure, homodecamer; pentamer of dimers. The cofactor is Mg(2+).

It is found in the cytoplasm. It catalyses the reaction 3-methyl-2-oxobutanoate + (6R)-5,10-methylene-5,6,7,8-tetrahydrofolate + H2O = 2-dehydropantoate + (6S)-5,6,7,8-tetrahydrofolate. Its pathway is cofactor biosynthesis; (R)-pantothenate biosynthesis; (R)-pantoate from 3-methyl-2-oxobutanoate: step 1/2. In terms of biological role, catalyzes the reversible reaction in which hydroxymethyl group from 5,10-methylenetetrahydrofolate is transferred onto alpha-ketoisovalerate to form ketopantoate. This chain is 3-methyl-2-oxobutanoate hydroxymethyltransferase, found in Janthinobacterium sp. (strain Marseille) (Minibacterium massiliensis).